A 205-amino-acid polypeptide reads, in one-letter code: Large ribosomal subunit protein uL3 (205 aa).

The protein belongs to the universal ribosomal protein uL3 family. Part of the 50S ribosomal subunit. Forms a cluster with proteins L14 and L19.

One of the primary rRNA binding proteins, it binds directly near the 3'-end of the 23S rRNA, where it nucleates assembly of the 50S subunit. This Bacteroides fragilis (strain ATCC 25285 / DSM 2151 / CCUG 4856 / JCM 11019 / LMG 10263 / NCTC 9343 / Onslow / VPI 2553 / EN-2) protein is Large ribosomal subunit protein uL3.